A 245-amino-acid chain; its full sequence is Orotidine 5'-phosphate decarboxylase (245 aa).

Residues Asp22, Lys44, Asp71–Thr80, Thr131, Arg192, Gln201, Gly221, and Arg222 contribute to the substrate site. Catalysis depends on Lys73, which acts as the Proton donor.

The protein belongs to the OMP decarboxylase family. Type 1 subfamily. As to quaternary structure, homodimer.

The enzyme catalyses orotidine 5'-phosphate + H(+) = UMP + CO2. The protein operates within pyrimidine metabolism; UMP biosynthesis via de novo pathway; UMP from orotate: step 2/2. Functionally, catalyzes the decarboxylation of orotidine 5'-monophosphate (OMP) to uridine 5'-monophosphate (UMP). This chain is Orotidine 5'-phosphate decarboxylase, found in Yersinia pseudotuberculosis serotype O:3 (strain YPIII).